A 112-amino-acid chain; its full sequence is Small ribosomal subunit protein bS16 (112 aa).

This sequence belongs to the bacterial ribosomal protein bS16 family.

The polypeptide is Small ribosomal subunit protein bS16 (Karelsulcia muelleri (strain GWSS) (Sulcia muelleri)).